An 862-amino-acid chain; its full sequence is DNA mismatch repair protein MutS (862 aa).

608-615 (GPNMAGKS) serves as a coordination point for ATP.

This sequence belongs to the DNA mismatch repair MutS family.

This protein is involved in the repair of mismatches in DNA. It is possible that it carries out the mismatch recognition step. This protein has a weak ATPase activity. This chain is DNA mismatch repair protein MutS, found in Borrelia garinii subsp. bavariensis (strain ATCC BAA-2496 / DSM 23469 / PBi) (Borreliella bavariensis).